The sequence spans 377 residues: Nitric oxide reductase FlRd-NAD(+) reductase (377 aa).

The protein belongs to the FAD-dependent oxidoreductase family. FAD is required as a cofactor.

It localises to the cytoplasm. It carries out the reaction 2 reduced [nitric oxide reductase rubredoxin domain] + NAD(+) + H(+) = 2 oxidized [nitric oxide reductase rubredoxin domain] + NADH. The protein operates within nitrogen metabolism; nitric oxide reduction. One of at least two accessory proteins for anaerobic nitric oxide (NO) reductase. Reduces the rubredoxin moiety of NO reductase. The sequence is that of Nitric oxide reductase FlRd-NAD(+) reductase from Escherichia coli O45:K1 (strain S88 / ExPEC).